The following is a 909-amino-acid chain: MEPQREFFHIAGRSAKEYLSENLVQFIQATQNYFNIGEKFRDPYVAPSAGVTTDRSQKLQLRVVPMQIEDNANYYKARFTLNVGDNRLVDLGSSYFDIKGTLDRGPSFKPYGGTAYNPLAPKSAPVNSPFIVGNDTHVVAQLPQTYAAANTGVTEAIQQQVSNVQPNPQDGLPNYSGPEVVDATTKAGLGRVVAEESEGQQFPCLRAYAAPQTAAGDVSTAPIEKTYVNTTNVAGRVSGTMATDVIDWQNPDAHFVDYVDDGRSTSAGNRPNYIGFRDNFIGIMYYNSGSNTGSLSSQTQQLNVVLDLNDRNSELSYQYMLADLTSRWHYFALWNQAVDSYDRHVRIIENDGYEEGPPNLSFPIQGIQNPFSPSSVGTEMTVNTANQTAAATANTVAHIGYGNIPAVEMNLPANLRRTFLYANVAMYLPDTYKFTPPNIDLPANHLSYGYMNGRLPLPNIIDTWTDIGARWSLDVMDTVNPFNHHRNTGLKYRSQLLGNGRHCNFHIQVPQKFFAIKNLLLLPGTYNYEWYFRKDPNMVLQSTLGNDLREDGAQITYNQVNLYVSFFPMNYDTQSELELMLRNATNDQNFSDYLGAVNNLYQIPAGSNTVVVNIPDRSWGAFRGWSFTRLKVTETPRIGATQDPNFEYSGTIPYLDGTFYLSHTFQRCSIQWDSSVPWPGNDRLLVPNWFEIKDPPNQDPEGYNTMQSNLTKDFFFTQMAASYNQGYQGFSYPSCTKHYGFINNFEPMSRQVPVYDATHPNLMAAYLNNPATMPIWNNCGFQQKTSTNALLERCGHAYVANWPFPLTGRDALPNQTTEKKFLVDNYLWQIPFSSNFLNMGTLTDLGQNVMYANSSHSLNMQFTVDPMNEPTYLLLLFGVFDQVVVNQPTRSGISVAYLRLPFASGSAAT.

Tyr-897 carries the post-translational modification Phosphotyrosine; by host.

The protein belongs to the adenoviridae hexon protein family. In terms of assembly, homotrimer. Interacts with the capsid vertex protein; this interaction binds the peripentonal hexons to the neighboring penton base. Interacts with the hexon-linking protein; this interaction tethers the hexons surrounding the penton to those situated in the central plate of the facet. Interacts with the hexon-interlacing protein; this interaction lashes the hexons together. Interacts with host dyneins DYNC1LI1 and DYNC1I2; this interaction might be involved in intracellular microtubule-dependent transport of incoming viral capsid. Interacts with the shutoff protein; this interaction allows folding and formation of hexons trimers. Interacts with pre-protein VI; this interaction probably allows nuclear import of hexon trimers and possibly pre-capsid assembly.

It localises to the virion. It is found in the host nucleus. Functionally, major capsid protein that self-associates to form 240 hexon trimers, each in the shape of a hexagon, building most of the pseudo T=25 capsid. Assembled into trimeric units with the help of the chaperone shutoff protein. Transported by pre-protein VI to the nucleus where it associates with other structural proteins to form an empty capsid. Might be involved, through its interaction with host dyneins, in the intracellular microtubule-dependent transport of incoming viral capsid to the nucleus. The polypeptide is Hexon protein (Pantherophis guttatus (Corn snake)).